A 252-amino-acid polypeptide reads, in one-letter code: Pyridoxine 5'-phosphate synthase (252 aa).

Positions 8 and 19 each coordinate 3-amino-2-oxopropyl phosphate. Catalysis depends on His-44, which acts as the Proton acceptor. 1-deoxy-D-xylulose 5-phosphate is bound by residues Arg-46 and His-51. Residue Glu-75 is the Proton acceptor of the active site. Thr-110 provides a ligand contact to 1-deoxy-D-xylulose 5-phosphate. His-201 acts as the Proton donor in catalysis. 3-amino-2-oxopropyl phosphate is bound by residues Asp-202 and 224–225; that span reads GH.

The protein belongs to the PNP synthase family. Homooctamer; tetramer of dimers.

Its subcellular location is the cytoplasm. It carries out the reaction 3-amino-2-oxopropyl phosphate + 1-deoxy-D-xylulose 5-phosphate = pyridoxine 5'-phosphate + phosphate + 2 H2O + H(+). It functions in the pathway cofactor biosynthesis; pyridoxine 5'-phosphate biosynthesis; pyridoxine 5'-phosphate from D-erythrose 4-phosphate: step 5/5. Its function is as follows. Catalyzes the complicated ring closure reaction between the two acyclic compounds 1-deoxy-D-xylulose-5-phosphate (DXP) and 3-amino-2-oxopropyl phosphate (1-amino-acetone-3-phosphate or AAP) to form pyridoxine 5'-phosphate (PNP) and inorganic phosphate. The chain is Pyridoxine 5'-phosphate synthase from Albidiferax ferrireducens (strain ATCC BAA-621 / DSM 15236 / T118) (Rhodoferax ferrireducens).